Consider the following 144-residue polypeptide: Galectin b (144 aa).

In terms of domain architecture, Galectin spans 1 to 138 (DHIDLEFDVG…DAVLRKLCVV (138 aa)).

Functionally, lectin that binds beta-galactoside and a wide array of complex carbohydrates. The sequence is that of Galectin b from Aplysina lactuca (Marine sponge).